Consider the following 244-residue polypeptide: MTLDLDANKKDDKILITTIQQEYKILAEYKMIESEKLGGIYTIPSLANSLQWFGVFFGRQGLYSESVFRFSLLLPDRFPDDKSLPTVIFQQNILHPHVCPYTNSLDISHAFPEWRCGEDHLWQLFKYMQAIFSDPIDSIRGIEMDKIKNPEAAELLLTNREEFAARVLENIKESKEHIYDPQPTEDPHYIVFEKFQPDVHGPVLERIKAGRNNQTDSTLQQTNGGTATGLSWVKEGEFKPLSIE.

The UBC core domain occupies 20–176; sequence QQEYKILAEY…VLENIKESKE (157 aa).

Belongs to the ubiquitin-conjugating enzyme family. FTS subfamily.

This Drosophila persimilis (Fruit fly) protein is Protein crossbronx (cbx).